The chain runs to 313 residues: tRNA dimethylallyltransferase (313 aa).

17–24 (GPTASGKT) contributes to the ATP binding site. Substrate is bound at residue 19-24 (TASGKT). 3 interaction with substrate tRNA regions span residues 42 to 45 (DSAL), 166 to 170 (QRLSR), and 247 to 252 (RCVGYR).

Belongs to the IPP transferase family. Monomer. Mg(2+) is required as a cofactor.

The catalysed reaction is adenosine(37) in tRNA + dimethylallyl diphosphate = N(6)-dimethylallyladenosine(37) in tRNA + diphosphate. Functionally, catalyzes the transfer of a dimethylallyl group onto the adenine at position 37 in tRNAs that read codons beginning with uridine, leading to the formation of N6-(dimethylallyl)adenosine (i(6)A). The sequence is that of tRNA dimethylallyltransferase from Serratia proteamaculans (strain 568).